The chain runs to 133 residues: ATP synthase epsilon chain, chloroplastic (133 aa).

The protein belongs to the ATPase epsilon chain family. F-type ATPases have 2 components, CF(1) - the catalytic core - and CF(0) - the membrane proton channel. CF(1) has five subunits: alpha(3), beta(3), gamma(1), delta(1), epsilon(1). CF(0) has three main subunits: a, b and c.

The protein localises to the plastid. Its subcellular location is the chloroplast thylakoid membrane. Its function is as follows. Produces ATP from ADP in the presence of a proton gradient across the membrane. In Gossypium barbadense (Sea Island cotton), this protein is ATP synthase epsilon chain, chloroplastic.